Consider the following 91-residue polypeptide: Elongation factor 1-beta (91 aa).

It belongs to the EF-1-beta/EF-1-delta family.

Functionally, promotes the exchange of GDP for GTP in EF-1-alpha/GDP, thus allowing the regeneration of EF-1-alpha/GTP that could then be used to form the ternary complex EF-1-alpha/GTP/AAtRNA. This chain is Elongation factor 1-beta, found in Pyrococcus furiosus (strain ATCC 43587 / DSM 3638 / JCM 8422 / Vc1).